Consider the following 79-residue polypeptide: Acyl carrier protein (79 aa).

The region spanning 1–76 (MEVFEEVRDV…DVVTYIENLN (76 aa)) is the Carrier domain. O-(pantetheine 4'-phosphoryl)serine is present on Ser36.

This sequence belongs to the acyl carrier protein (ACP) family. 4'-phosphopantetheine is transferred from CoA to a specific serine of apo-ACP by AcpS. This modification is essential for activity because fatty acids are bound in thioester linkage to the sulfhydryl of the prosthetic group.

It localises to the cytoplasm. It participates in lipid metabolism; fatty acid biosynthesis. In terms of biological role, carrier of the growing fatty acid chain in fatty acid biosynthesis. This Campylobacter hominis (strain ATCC BAA-381 / DSM 21671 / CCUG 45161 / LMG 19568 / NCTC 13146 / CH001A) protein is Acyl carrier protein.